Reading from the N-terminus, the 159-residue chain is MQQAPVILSTLDKLLNWGRSNSLWPLTYGLACCAIEMMATGGSRFDFDRFGTIFRASPRQSDVMIIAGTLTKKHAEFMRRLYDQMPEPKWVISMGSCANTGGMFNTYATVQGADRVVPVDIYLPGCAPRPETLQYALMVLQDKIRRSKAIKQDAPKRLV.

[4Fe-4S] cluster-binding residues include cysteine 32, cysteine 33, cysteine 97, and cysteine 126.

The protein belongs to the complex I 20 kDa subunit family. In terms of assembly, NDH-1 is composed of 14 different subunits. Subunits NuoB, C, D, E, F, and G constitute the peripheral sector of the complex. The cofactor is [4Fe-4S] cluster.

The protein resides in the cell inner membrane. It carries out the reaction a quinone + NADH + 5 H(+)(in) = a quinol + NAD(+) + 4 H(+)(out). Functionally, NDH-1 shuttles electrons from NADH, via FMN and iron-sulfur (Fe-S) centers, to quinones in the respiratory chain. The immediate electron acceptor for the enzyme in this species is believed to be ubiquinone. Couples the redox reaction to proton translocation (for every two electrons transferred, four hydrogen ions are translocated across the cytoplasmic membrane), and thus conserves the redox energy in a proton gradient. This chain is NADH-quinone oxidoreductase subunit B, found in Helicobacter pylori (strain J99 / ATCC 700824) (Campylobacter pylori J99).